Here is a 404-residue protein sequence, read N- to C-terminus: Schlafen-like protein 1 (404 aa).

Disordered stretches follow at residues 1 to 31 (MTPM…LPTE) and 139 to 170 (GPLS…AWPT). Polar residues predominate over residues 7–16 (SVQTQVSEPF). Low complexity predominate over residues 152 to 165 (GLSPGPNPGSGVPL). An ATP-binding site is contributed by 258–265 (GVEDSGLV). The stretch at 365–395 (RWLVELGKLEERVKVLTMEKEQLQQQLQQHG) forms a coiled coil.

Belongs to the Schlafen family. Subgroup I subfamily.

This Macaca fascicularis (Crab-eating macaque) protein is Schlafen-like protein 1 (SLFNL1).